The following is a 250-amino-acid chain: Cellulose biosynthesis protein BcsQ (250 aa).

Position 9 to 16 (9 to 16 (VRGGVGTT)) interacts with ATP.

This sequence belongs to the BcsQ family.

The protein localises to the cytoplasm. In terms of biological role, essential for cellulose biosynthesis, shown for strain 1094, a commensal, natural cellulose producer. Also shown in strain W3110 which has a restored reading frame (TAG stop codon to TTG for amino acid 6, called strain AR3110), this protein. May play a role in subcellular localization of an active cellulose biosynthesis apparatus at the bacterial cell pole. The combination of cellulose and the curli fiber network confer cohesion, elasticity and tissue-like properties to colonies. The protein is Cellulose biosynthesis protein BcsQ of Escherichia coli (strain K12).